The chain runs to 184 residues: Endoribonuclease YbeY (184 aa).

Zn(2+) contacts are provided by His118, His122, and His128. The interval 156–184 is disordered; sequence YHQDRQSQKDQRLLDKSRYFDELNHGDTP. The segment covering 157–184 has biased composition (basic and acidic residues); sequence HQDRQSQKDQRLLDKSRYFDELNHGDTP.

Belongs to the endoribonuclease YbeY family. It depends on Zn(2+) as a cofactor.

It localises to the cytoplasm. Its function is as follows. Single strand-specific metallo-endoribonuclease involved in late-stage 70S ribosome quality control and in maturation of the 3' terminus of the 16S rRNA. The chain is Endoribonuclease YbeY from Mycolicibacterium vanbaalenii (strain DSM 7251 / JCM 13017 / BCRC 16820 / KCTC 9966 / NRRL B-24157 / PYR-1) (Mycobacterium vanbaalenii).